Consider the following 70-residue polypeptide: Probable non-specific lipid-transfer protein 2 (70 aa).

4 cysteine pairs are disulfide-bonded: Cys-4–Cys-38, Cys-12–Cys-26, Cys-27–Cys-62, and Cys-36–Cys-69.

In terms of biological role, potential phospholipid transfer protein. This is Probable non-specific lipid-transfer protein 2 from Zea mays (Maize).